The primary structure comprises 499 residues: Nuclear receptor-binding protein 2 (499 aa).

The tract at residues 1 to 31 (MAAPEPAPRRGREREREDESEDESDILEESP) is disordered. A compositionally biased stretch (basic and acidic residues) spans 7–17 (APRRGRERERE). The span at 18–28 (DESEDESDILE) shows a compositional bias: acidic residues. The Protein kinase domain maps to 36–304 (QKRREQVNQG…AHNLLFHRVL (269 aa)). The tract at residues 396–416 (APPPEEAQKAKTPTPEPFDSE) is disordered. Phosphothreonine is present on residues T407 and T409.

This sequence belongs to the protein kinase superfamily. Ser/Thr protein kinase family. As to expression, expressed in Purkinje cells of the cerebellum and neurons in the CA3 region of the hippocampus. Also detected in non-neural tissues including mesenchymal layer adjacent to epithelium in developing bronchi of the lung, the epithelium of the stomach as well as cells in the liver.

Its subcellular location is the cytoplasm. Functionally, may regulate apoptosis of neural progenitor cells during their differentiation. In Mus musculus (Mouse), this protein is Nuclear receptor-binding protein 2.